The primary structure comprises 329 residues: Quinone oxidoreductase (329 aa).

Ala2 is modified (N-acetylalanine). Lys23 carries the post-translational modification N6-acetyllysine. NADP(+) is bound by residues Tyr53, Ser158 to Val161, Gly181, His200, Asn229, Val246 to Arg249, and Val269 to Leu271. A Phosphoserine modification is found at Ser248.

This sequence belongs to the zinc-containing alcohol dehydrogenase family. Quinone oxidoreductase subfamily. Homotetramer.

The protein resides in the cytoplasm. It carries out the reaction 2 a quinone + NADPH + H(+) = 2 a 1,4-benzosemiquinone + NADP(+). Its function is as follows. Does not have alcohol dehydrogenase activity. Binds NADP and acts through a one-electron transfer process. Orthoquinones, such as 1,2-naphthoquinone or 9,10-phenanthrenequinone, are the best substrates (in vitro). May act in the detoxification of xenobiotics. Interacts with (AU)-rich elements (ARE) in the 3'-UTR of target mRNA species and enhances their stability. NADPH binding interferes with mRNA binding. This chain is Quinone oxidoreductase (CRYZ), found in Sus scrofa (Pig).